Here is a 1931-residue protein sequence, read N- to C-terminus: MQKDYMKLHSNSDFDADQLDEHDDNVFQDVYDTGFDDGYIKANQENLIANQYKKLDKNSYQNGNNSFYTKDELEKLKKQSFQVNQDIDYYQQAQTEISSERQRLLQAIDDLEANQDQFHPEDFQAERQYLINELDRLDSELYHIEQYKNDSIDFVNELNQRLSAEQAKIDSYNSSLDKNIRKDYIQIDQLKNKLAEETTEYNDLLNRSTDEISEIDRQSERLQNLIDERIAKLNNDSYGVSSLDSSTRERLKKEIHDLSEQRKKLQSAKKLHLYNLNLKKESIRRYRSQLEQYLESLKQMRNEHNKKLKGYAQNLDNIKNEVEKAKQNFNDQQLKILQSKANADQYFALRKIELENSYKKAKNAILEANKAHAKNVQEEQALANKNNKTQRLLNKLKEDYDRLKIASLSFESMRKQSLAALNNLQDELKQKHNLLERKKHEQDGIVNEKISELEGYRSDLVDQKLKIEREKENQERRYKAAEASLNKKRQEIDELFLEANTKLNEASLKENDLNNQKREILAKLRNLEHLKSEIDQRRRDLDQRELIDQQTIRKIQLDVESERADLQRILLIERKKNDERQQELLQYERDIKRQQTDFENTVNWEQKKLSQREKELKDGYEQLQLKQSEVQEKIDELNEEINRAQKSKQNSLVLEQKLKSDLEHLNLSKNYLDKQQEELNQKSDKMIEDLKVFERDLKRQKEDLSIYEKSLQQKEASLINFQNDVTVQKNEAYHKAQAIHQELELKKAAIENELRKLTAERKAVDADKEENTKLKKFIDEEIRSLANERKELEIYQNNIENFKNNAVDRLNVLESDLVKKRNELEQLKKEQQTHYNELNSNLTNELQELEEQKKKFAHQKQQKFEELLQAKNNLSIKENELVLYAQKVNDRYNELKAIEKSNTAKSEMINAKLEEFKHAEIDYLNYQNKIKQEQIKFDNQVKILESQYNQRNEILLIREEQIKQKKAEQQAQEKQIQKDFKRLQEEKNNFDDQKRNKFNKISNLYLEIKKQRDEVDLAQRQIEDQKEELLIKAREGRLQKQEIEDRLAVLEKSEKRFRQEDELLAKKRIDLIERIGVLKADINKKHEILSLRSVQLTEKAKKQQEKDADLQRKFDLLESEVERFNEEKKSEFQKLKVERDKLAHREKNVSKNMNEINLALAKLDLIRKNNKVDKAKINEKLALLNDQKEKIDRENDLLDAKKTEVITRLRKMENDLEFEKQKVLLDRSNIERISSDQQALARELETKYQTLEREKRSFSQRKENELKEIDDFYQQVQHKERTLNLKIEDLKQLRYLLEKESYNVNVNKKDLKVRIEHYQRLERAIKNEQHKLNNQKNNFFNKVELLNDQLNKKSSKIALLRSKIYNTYKQQQQQKQILLEEKHKNSQLRKSLLKTQEELHQQKAQFSIAKKQEEKKLKNQKDLIQNTLSEVIKQKDQITNIKQEVDLKQTQLNNLEKLIIKQRADLQKELEKNSENTYRLQKAERLLEEKKTKLRLEYDKAKKVLSTAKATDQALKTKQAKVQDQFKKLVLINKKIIEARNNLLKQRNIIQKEINNRNMANFQNPYPNFLNLAPNTQVVPAQTIMPVQTPQLVGVNYPNQPAFDFNNPLMQMQQLINQQQMLMMQKEHQWALEEANKKNSRLAKQLKQLKHHKQALTESTSEHLNYHNLLNADNSYKINSLQNLLSKVAYNTKRRINQLEHNLDPETADLNQLHELNANSQLLDEIRTVLSNTTTNTNAVVPANSYSKELRMLFDEIKADFKKQAVLFNTQKEVFTNQINQLAQAVEQGPIEVRKTLESQDQKYQQMFDNFRDAYEQNISLLRNENNEVQKKLTDLYDEIAAIKTNTEKIKKTTLRPEVRNNANEGLASFNSVNRDKKDYLDQTLPVHQNLRIDLNQNRDLSHAKKERINQLANEIKTIKELIEKRKQTSL.

Coiled coils occupy residues 1626-1659 (KEHQ…LTES), 1768-1846 (FNTQ…IKTN), and 1903-1930 (HAKK…KQTS).

Its function is as follows. Component of the cytoskeleton-like structure which stabilizes the shape of the wall-less Mycoplasma. This cytoskeleton-like network of accessory proteins containing HMW proteins 1 to 5 allows the proper anchoring of cytadhesin proteins in the mycoplasmal membrane at the attachment organelle. In Mycoplasmoides gallisepticum (strain R(low / passage 15 / clone 2)) (Mycoplasma gallisepticum), this protein is Cytadherence high molecular weight protein 2 (hlp2).